A 192-amino-acid polypeptide reads, in one-letter code: uncharacterized protein (192 aa).

Residues 53–111 (CLKESVERARKVYLSLLKDYERKSREYEKAYENYLKELRTYRETLYRIKEDLKFYERIC) are a coiled coil.

This is an uncharacterized protein from Aquifex aeolicus (strain VF5).